A 1039-amino-acid chain; its full sequence is Antigen 43 (1039 aa).

The signal sequence occupies residues 1 to 52 (MKRHLNTCYRLVWNHMTGAFVVASELARARGKRGGVAVALSLAAVTSLPVLA). The 303-residue stretch at 737–1039 (VNGENNSVRL…NGQATLNVTF (303 aa)) folds into the Autotransporter domain.

Interaction with TamA of the translocation and assembly module (TAM) initiates insertion in the outer membrane.

Its subcellular location is the periplasm. The protein localises to the secreted. The protein resides in the cell surface. It localises to the cell outer membrane. Controls colony form variation and autoaggregation. May function as an adhesin. The sequence is that of Antigen 43 (flu) from Escherichia coli (strain K12).